The chain runs to 85 residues: Large ribosomal subunit protein bL27 (85 aa).

Residues 1-20 (MAHKKGASSSRNGRDSNAQR) form a disordered region. The span at 7–19 (ASSSRNGRDSNAQ) shows a compositional bias: polar residues.

Belongs to the bacterial ribosomal protein bL27 family.

The chain is Large ribosomal subunit protein bL27 from Kineococcus radiotolerans (strain ATCC BAA-149 / DSM 14245 / SRS30216).